We begin with the raw amino-acid sequence, 35 residues long: U1-theraphotoxin-Hs1f (35 aa).

3 disulfide bridges follow: Cys-3–Cys-16, Cys-7–Cys-27, and Cys-21–Cys-32.

It belongs to the neurotoxin 12 (Hwtx-2) family. 02 (Hwtx-2) subfamily. As to expression, expressed by the venom gland.

Its subcellular location is the secreted. Its function is as follows. Blocks neuromuscular transmission. Acts cooperatively to potentiate the activity of huwentoxin-I. Paralyzes locusts and kills mice following intracerebroventricular injection. This chain is U1-theraphotoxin-Hs1f, found in Cyriopagopus schmidti (Chinese bird spider).